The sequence spans 466 residues: Cysteine--tRNA ligase (466 aa).

Residue C29 participates in Zn(2+) binding. The 'HIGH' region signature appears at 31-41; sequence ATVQAPPHIGH. Residues C211, H236, and E240 each coordinate Zn(2+). The 'KMSKS' region signature appears at 267–271; the sequence is KMSKS. An ATP-binding site is contributed by K270.

The protein belongs to the class-I aminoacyl-tRNA synthetase family. Monomer. The cofactor is Zn(2+).

The protein resides in the cytoplasm. It catalyses the reaction tRNA(Cys) + L-cysteine + ATP = L-cysteinyl-tRNA(Cys) + AMP + diphosphate. In Thermobifida fusca (strain YX), this protein is Cysteine--tRNA ligase.